Reading from the N-terminus, the 81-residue chain is HssA/B-like protein 5 (81 aa).

Belongs to the hssA/B family.

The polypeptide is HssA/B-like protein 5 (hssl5) (Dictyostelium discoideum (Social amoeba)).